A 338-amino-acid chain; its full sequence is Heat-inducible transcription repressor HrcA (338 aa).

The protein belongs to the HrcA family.

Its function is as follows. Negative regulator of class I heat shock genes (grpE-dnaK-dnaJ and groELS operons). Prevents heat-shock induction of these operons. This is Heat-inducible transcription repressor HrcA from Nitrosomonas eutropha (strain DSM 101675 / C91 / Nm57).